The sequence spans 438 residues: uncharacterized protein (438 aa).

N6-(pyridoxal phosphate)lysine is present on K273.

This sequence belongs to the class-III pyridoxal-phosphate-dependent aminotransferase family. The cofactor is pyridoxal 5'-phosphate.

It is found in the mitochondrion. This is an uncharacterized protein from Schizosaccharomyces pombe (strain 972 / ATCC 24843) (Fission yeast).